The primary structure comprises 200 residues: dITP/XTP pyrophosphatase (200 aa).

Residue 7–12 (TQNKRK) participates in substrate binding. The Mg(2+) site is built by E42 and D71. Catalysis depends on D71, which acts as the Proton acceptor. Substrate-binding positions include S72, 156 to 159 (FGYD), K179, and 184 to 185 (HR).

The protein belongs to the HAM1 NTPase family. In terms of assembly, homodimer. Mg(2+) serves as cofactor.

It carries out the reaction XTP + H2O = XMP + diphosphate + H(+). It catalyses the reaction dITP + H2O = dIMP + diphosphate + H(+). The catalysed reaction is ITP + H2O = IMP + diphosphate + H(+). In terms of biological role, pyrophosphatase that catalyzes the hydrolysis of nucleoside triphosphates to their monophosphate derivatives, with a high preference for the non-canonical purine nucleotides XTP (xanthosine triphosphate), dITP (deoxyinosine triphosphate) and ITP. Seems to function as a house-cleaning enzyme that removes non-canonical purine nucleotides from the nucleotide pool, thus preventing their incorporation into DNA/RNA and avoiding chromosomal lesions. The sequence is that of dITP/XTP pyrophosphatase from Malacoplasma penetrans (strain HF-2) (Mycoplasma penetrans).